A 593-amino-acid polypeptide reads, in one-letter code: UvrABC system protein C (593 aa).

The GIY-YIG domain maps to 14–91 (DSPGCYLHKD…IQENMPKYNI (78 aa)). A UVR domain is found at 196 to 231 (NKIVNGLTEKMKSAAMTMEFERAAEYRDLIEAISLL).

The protein belongs to the UvrC family. In terms of assembly, interacts with UvrB in an incision complex.

It is found in the cytoplasm. The UvrABC repair system catalyzes the recognition and processing of DNA lesions. UvrC both incises the 5' and 3' sides of the lesion. The N-terminal half is responsible for the 3' incision and the C-terminal half is responsible for the 5' incision. The sequence is that of UvrABC system protein C from Streptococcus agalactiae serotype V (strain ATCC BAA-611 / 2603 V/R).